Here is a 902-residue protein sequence, read N- to C-terminus: Adhesion G-protein coupled receptor D1 (902 aa).

Positions 1–25 are cleaved as a signal peptide; it reads MKKLLPLCCWHSWLLLFYCDFQVRG. Residues 26-598 are Extracellular-facing; sequence AHTRSHVHPG…GHQVALSSIS (573 aa). N-linked (GlcNAc...) asparagine glycosylation is found at N68, N76, N83, N89, N121, N183, N217, N310, N330, N337, N347, N422, N504, N529, and N561. The Pentraxin (PTX) domain maps to 111 to 304; sequence KGVTFLYYRK…VNTMAPTNAY (194 aa). Residues 399-585 form the GAIN-B domain; that stretch reads QVAIVGSSSM…AILMQVVPLE (187 aa). Cystine bridges form between C538–C567 and C555–C569. A GPS region spans residues 538-585; it reads CAFLDFSSGEGIWSNQGCALTEGNLSYSICRCTHLTNFAILMQVVPLE. The interval 574 to 582 is stachel; sequence NFAILMQVV. Q591 lines the 17beta-hydroxy-5alpha-androstan-3-one pocket. A helical transmembrane segment spans residues 599–619; it reads YIGCSLSVLCLAITLVTFAVL. At 620–630 the chain is on the cytoplasmic side; that stretch reads SSVSTIRNQRY. The chain crosses the membrane as a helical span at residues 631–651; sequence HIHANLSCAVLVAQVLLLISF. The Extracellular segment spans residues 652-661; that stretch reads RFEPGTAPCQ. A disulfide bridge links C660 with C732. The chain crosses the membrane as a helical span at residues 662 to 682; that stretch reads VLAMLLHYFFLSAFAWMLVEG. Residues 683–702 lie on the Cytoplasmic side of the membrane; that stretch reads LHLYSMVIKVFGSEDSKHRY. A helical membrane pass occupies residues 703 to 723; sequence YYGIGWGFPLLICIISIVFAM. The Extracellular portion of the chain corresponds to 724–739; the sequence is DSYGTSKNCWLSLGNG. A helical membrane pass occupies residues 740–760; the sequence is AIWAFVAPALFIIVVNIGILI. The Cytoplasmic segment spans residues 761 to 788; it reads AVTRVISQISAENYKIHGDPSAFKLTAK. A helical membrane pass occupies residues 789–809; that stretch reads AVAVLLPILGTSWVFGVLAVN. Over 810 to 812 the chain is Extracellular; it reads NQA. Residues 813–833 form a helical membrane-spanning segment; sequence MVFQYMFAILNSLQGFFIFLF. Residues 834-902 lie on the Cytoplasmic side of the membrane; the sequence is HCLLNSEVRA…SGHRVDLSAV (69 aa). The interval 865–902 is disordered; that stretch reads KPFSSDIMNGTRPATGSTRLSPWDKSSHSGHRVDLSAV. The span at 870–884 shows a compositional bias: polar residues; sequence DIMNGTRPATGSTRL. The span at 889–902 shows a compositional bias: basic and acidic residues; it reads KSSHSGHRVDLSAV.

The protein belongs to the G-protein coupled receptor 2 family. Adhesion G-protein coupled receptor (ADGR) subfamily. In terms of assembly, heterodimer of 2 chains generated by proteolytic processing; the large extracellular N-terminal fragment and the membrane-bound C-terminal fragment predominantly remain associated and non-covalently linked. Interacts with ESYT1; interaction takes place in absence of cytosolic calcium and inhibits the G protein-coupled receptor activity of ADGRD1. Autoproteolytically processed at the GPS region of the GAIN-B domain; this cleavage modulates receptor activity. Cleavage takes place early in the secretory pathway before N-glycosylation.

Its subcellular location is the cell membrane. Its activity is regulated as follows. Forms a heterodimer of 2 chains generated by proteolytic processing that remain associated through non-covalent interactions mediated by the GAIN-B domain. In the inactivated receptor, the Stachel sequence (also named stalk) is embedded in the GAIN-B domain, where it adopts a beta-strand conformation. On activation, the Stachel moves into the 7 transmembrane region and adopts a twisted hook-shaped configuration that forms contacts within the receptor, leading to coupling of a G-alpha protein, which activates signaling. The cleaved GAIN-B and N-terminal domains can then dissociate from the rest of the receptor. Interaction with ESYT1 in absence of cytosolic calcium inhibits the G protein-coupled receptor activity; interaction and inhibition is relieved when cytosolic calcium increases. Adhesion G-protein coupled receptor (aGPCR) for androgen hormone 5alpha-dihydrotestosterone (5alpha-DHT), also named 17beta-hydroxy-5alpha-androstan-3-one, the most potent hormone among androgens. Also activated by methenolone drug. Ligand binding causes a conformation change that triggers signaling via guanine nucleotide-binding proteins (G proteins) and modulates the activity of downstream effectors, such as adenylate cyclase. ADGRD1 is coupled to G(s) G proteins and mediates activation of adenylate cyclase activity. Acts as a 5alpha-DHT receptor in muscle cells, thereby increasing intracellular cyclic AMP (cAMP) levels and enhancing muscle strength. This chain is Adhesion G-protein coupled receptor D1 (ADGRD1), found in Bos taurus (Bovine).